A 614-amino-acid polypeptide reads, in one-letter code: Spastin (614 aa).

Residues 1–45 (MNSPGGRGKKKGSGGPSSPVPPRPPPPCQARSRPAPKPAPPPQSP) form a disordered region. Residues 1–50 (MNSPGGRGKKKGSGGPSSPVPPRPPPPCQARSRPAPKPAPPPQSPHKRNL) are required for nuclear localization. Residues 1–56 (MNSPGGRGKKKGSGGPSSPVPPRPPPPCQARSRPAPKPAPPPQSPHKRNLYYFSYP) lie on the Cytoplasmic side of the membrane. The required for interaction with ATL1 stretch occupies residues 1-80 (MNSPGGRGKK…LGLLFVWLCQ (80 aa)). The tract at residues 1–192 (MNSPGGRGKK…LVMAKDRLQL (192 aa)) is required for midbody localization. The segment at 1–298 (MNSPGGRGKK…STPKTNRTNK (298 aa)) is required for interaction with RTN1. Positions 4-11 (PGGRGKKK) match the Nuclear localization signal motif. Pro residues-rich tracts occupy residues 18-28 (SPVPPRPPPPC) and 35-44 (APKPAPPPQS). The required for interaction with SSNA1 and microtubules stretch occupies residues 50–87 (LYYFSYPLFLGFALLRLVAFHLGLLFVWLCQRFSRALM). Residues 57–77 (LFLGFALLRLVAFHLGLLFVW) constitute an intramembrane region (helical). The Nuclear export signal motif lies at 59–67 (LGFALLRLV). Over 78 to 614 (LCQRFSRALM…WNKDFGDTTV (537 aa)) the chain is Cytoplasmic. The interval 110–194 (EAERVRAFHK…MAKDRLQLLE (85 aa)) is sufficient for interaction with CHMP1B. Positions 112–198 (ERVRAFHKQA…RLQLLEKLQP (87 aa)) are required for interaction with microtubules. Positions 118–193 (HKQAFEYISV…VMAKDRLQLL (76 aa)) constitute an MIT domain. The interval 220–310 (NGHLQSESGA…TPTTAARKKK (91 aa)) is disordered. The sufficient for microtubule severing stretch occupies residues 226–614 (ESGAVPKRKD…WNKDFGDTTV (389 aa)). A phosphoserine mark is found at serine 243 and serine 266. The required for interaction with microtubules and microtubule severing stretch occupies residues 268–326 (SGLSMVSGVRQGPGSAAATHKSTPKTNRTNKPSTPTTAARKKKDLKNFRNVDSNLANLI). Positions 287–304 (HKSTPKTNRTNKPSTPTT) are enriched in polar residues. Residue threonine 304 is modified to Phosphothreonine. The Nuclear localization signal motif lies at 307–310 (RKKK). 380–387 (GPPGNGKT) lines the ATP pocket. Position 595 is a phosphoserine (serine 595).

It belongs to the AAA ATPase family. Spastin subfamily. Homohexamer. Mostly monomeric, but assembles into hexameric structure for short periods of time. Oligomerization seems to be a prerequisite for catalytic activity. Binding to ATP in a cleft between two adjacent subunits stabilizes the homohexameric form. Binds to microtubules at least in part via the alpha-tubulin and beta-tubulin tails. The hexamer adopts a ring conformation through which microtubules pass prior to being severed. Does not interact strongly with tubulin heterodimers. Interacts (via MIT domain) with CHMP1B; the interaction is direct. Interacts with SSNA1. Interacts with ATL1. Interacts with RTN1. Interacts with ZFYVE27. Interacts with REEP1. Interacts (via MIT domain) with IST1.

It is found in the membrane. Its subcellular location is the endoplasmic reticulum. It localises to the midbody. The protein resides in the cytoplasm. The protein localises to the cytoskeleton. It is found in the microtubule organizing center. Its subcellular location is the centrosome. It localises to the perinuclear region. The protein resides in the nucleus. The protein localises to the spindle. It is found in the cell projection. Its subcellular location is the axon. The enzyme catalyses n ATP + n H2O + a microtubule = n ADP + n phosphate + (n+1) alpha/beta tubulin heterodimers.. Allosteric enzyme with a cooperative mechanism; at least two neighbor subunits influence each other strongly in spastin hexamers. Microtubule binding promotes cooperative interactions among spastin subunits. Its function is as follows. ATP-dependent microtubule severing protein that specifically recognizes and cuts microtubules that are polyglutamylated. Preferentially recognizes and acts on microtubules decorated with short polyglutamate tails: severing activity increases as the number of glutamates per tubulin rises from one to eight, but decreases beyond this glutamylation threshold. Severing activity is not dependent on tubulin acetylation or detyrosination. Microtubule severing promotes reorganization of cellular microtubule arrays and the release of microtubules from the centrosome following nucleation. It is critical for the biogenesis and maintenance of complex microtubule arrays in axons, spindles and cilia. SPAST is involved in abscission step of cytokinesis and nuclear envelope reassembly during anaphase in cooperation with the ESCRT-III complex. Recruited at the midbody, probably by IST1, and participates in membrane fission during abscission together with the ESCRT-III complex. Recruited to the nuclear membrane by IST1 and mediates microtubule severing, promoting nuclear envelope sealing and mitotic spindle disassembly during late anaphase. Required for membrane traffic from the endoplasmic reticulum (ER) to the Golgi and endosome recycling. Recruited by IST1 to endosomes and regulates early endosomal tubulation and recycling by mediating microtubule severing. Probably plays a role in axon growth and the formation of axonal branches. The chain is Spastin from Bos taurus (Bovine).